Consider the following 130-residue polypeptide: UPF0251 protein MmarC7_1642 (130 aa).

The protein belongs to the UPF0251 family.

In Methanococcus maripaludis (strain C7 / ATCC BAA-1331), this protein is UPF0251 protein MmarC7_1642.